Consider the following 258-residue polypeptide: 5'-nucleotidase SurE (258 aa).

A divalent metal cation contacts are provided by D13, D14, S44, and N92. Residues 237–258 (SPLTAPHSTEHHDALDGIATEF) form a disordered region.

The protein belongs to the SurE nucleotidase family. It depends on a divalent metal cation as a cofactor.

The protein localises to the cytoplasm. The enzyme catalyses a ribonucleoside 5'-phosphate + H2O = a ribonucleoside + phosphate. Nucleotidase that shows phosphatase activity on nucleoside 5'-monophosphates. In Halobacterium salinarum (strain ATCC 29341 / DSM 671 / R1), this protein is 5'-nucleotidase SurE.